Here is a 235-residue protein sequence, read N- to C-terminus: MLDREGFRPNVGIILINARNEVFWGKRIGEHSWQFPQGGIKYGETPEQAMFRELHEEVGLLPEHVRIVGRTRDWLRYEVPDKFIRREIRGHYRGQKQIWFLLRMVGRDCDIQLRATEHPEFDAWRWSQYWVPLEAVIEFKREVYQLALSELSRFVQRQTRAPLSPYGRGGQHRERDGRDARDSRERSSDQGGRNEQHAQPALTVTTTTVIVETVSVSAPTPSSPNPDDTAPKDNS.

A Nudix hydrolase domain is found at 6-149 (GFRPNVGIIL…KREVYQLALS (144 aa)). Positions 38 to 59 (GGIKYGETPEQAMFRELHEEVG) match the Nudix box motif. Residues 161 to 235 (APLSPYGRGG…PDDTAPKDNS (75 aa)) are disordered. Residues 171–196 (QHRERDGRDARDSRERSSDQGGRNEQ) are compositionally biased toward basic and acidic residues. A compositionally biased stretch (low complexity) spans 203–220 (TVTTTTVIVETVSVSAPT).

The protein belongs to the Nudix hydrolase family. RppH subfamily. It depends on a divalent metal cation as a cofactor.

Its function is as follows. Accelerates the degradation of transcripts by removing pyrophosphate from the 5'-end of triphosphorylated RNA, leading to a more labile monophosphorylated state that can stimulate subsequent ribonuclease cleavage. The sequence is that of RNA pyrophosphohydrolase from Ralstonia pickettii (strain 12J).